The following is a 94-amino-acid chain: Na(+)/H(+) antiporter subunit F (94 aa).

Transmembrane regions (helical) follow at residues 2-22 (FTLILQIALGIMAVSTFLYVI), 34-54 (VVALDAIGINLIAITALVSIL), and 59-79 (AFLDIILLLGILSFIGTIAFS).

The protein belongs to the CPA3 antiporters (TC 2.A.63) subunit F family. As to quaternary structure, forms a heterooligomeric complex that consists of seven subunits: MrpA, MrpB, MrpC, MrpD, MrpE, MrpF and MrpG.

The protein resides in the cell membrane. Its function is as follows. Mrp complex is a Na(+)/H(+) antiporter that is considered to be the major Na(+) excretion system in B.subtilis. Has a major role in Na(+) resistance and a minor role in Na(+)- and K(+)-dependent pH homeostasis as compared to TetB. MrpA may be the actual Na(+)/H(+) antiporter, although the six other Mrp proteins are all required for Na(+)/H(+) antiport activity and Na(+) resistance. MrpA is required for initiation of sporulation when external Na(+) concentration increases. Also transports Li(+) but not K(+), Ca(2+) or Mg(2+). Functionally, involved in cholate and Na(+) efflux activities, which may be mechanistically coupled. Does not require other Mrp proteins for its own function. The chain is Na(+)/H(+) antiporter subunit F (mrpF) from Bacillus subtilis (strain 168).